Here is a 705-residue protein sequence, read N- to C-terminus: Ribosomal RNA large subunit methyltransferase K/L (705 aa).

One can recognise a THUMP domain in the interval 43–154; that stretch reads VVYRCCLWSR…GEKGILGFDL (112 aa).

The protein belongs to the methyltransferase superfamily. RlmKL family.

The protein resides in the cytoplasm. The catalysed reaction is guanosine(2445) in 23S rRNA + S-adenosyl-L-methionine = N(2)-methylguanosine(2445) in 23S rRNA + S-adenosyl-L-homocysteine + H(+). It catalyses the reaction guanosine(2069) in 23S rRNA + S-adenosyl-L-methionine = N(2)-methylguanosine(2069) in 23S rRNA + S-adenosyl-L-homocysteine + H(+). Functionally, specifically methylates the guanine in position 2445 (m2G2445) and the guanine in position 2069 (m7G2069) of 23S rRNA. The protein is Ribosomal RNA large subunit methyltransferase K/L of Aliivibrio fischeri (strain ATCC 700601 / ES114) (Vibrio fischeri).